A 456-amino-acid polypeptide reads, in one-letter code: Histidine--tRNA ligase (456 aa).

Positions 1-11 (MTQNENPSAQS) are enriched in polar residues. The interval 1–22 (MTQNENPSAQSGAKPEDKARPA) is disordered.

This sequence belongs to the class-II aminoacyl-tRNA synthetase family. In terms of assembly, homodimer.

Its subcellular location is the cytoplasm. The catalysed reaction is tRNA(His) + L-histidine + ATP = L-histidyl-tRNA(His) + AMP + diphosphate + H(+). The chain is Histidine--tRNA ligase from Cupriavidus pinatubonensis (strain JMP 134 / LMG 1197) (Cupriavidus necator (strain JMP 134)).